The primary structure comprises 100 residues: Aspartyl/glutamyl-tRNA(Asn/Gln) amidotransferase subunit C (100 aa).

This sequence belongs to the GatC family. As to quaternary structure, heterotrimer of A, B and C subunits.

The catalysed reaction is L-glutamyl-tRNA(Gln) + L-glutamine + ATP + H2O = L-glutaminyl-tRNA(Gln) + L-glutamate + ADP + phosphate + H(+). The enzyme catalyses L-aspartyl-tRNA(Asn) + L-glutamine + ATP + H2O = L-asparaginyl-tRNA(Asn) + L-glutamate + ADP + phosphate + 2 H(+). In terms of biological role, allows the formation of correctly charged Asn-tRNA(Asn) or Gln-tRNA(Gln) through the transamidation of misacylated Asp-tRNA(Asn) or Glu-tRNA(Gln) in organisms which lack either or both of asparaginyl-tRNA or glutaminyl-tRNA synthetases. The reaction takes place in the presence of glutamine and ATP through an activated phospho-Asp-tRNA(Asn) or phospho-Glu-tRNA(Gln). In Rickettsia bellii (strain RML369-C), this protein is Aspartyl/glutamyl-tRNA(Asn/Gln) amidotransferase subunit C.